Here is a 294-residue protein sequence, read N- to C-terminus: Elongation factor Ts (294 aa).

An involved in Mg(2+) ion dislocation from EF-Tu region spans residues 80-83 (TDFV).

Belongs to the EF-Ts family.

Its subcellular location is the cytoplasm. Associates with the EF-Tu.GDP complex and induces the exchange of GDP to GTP. It remains bound to the aminoacyl-tRNA.EF-Tu.GTP complex up to the GTP hydrolysis stage on the ribosome. This is Elongation factor Ts from Listeria monocytogenes serotype 4b (strain CLIP80459).